Consider the following 189-residue polypeptide: uncharacterized protein (189 aa).

Residues 1-174 (MKCWTLGDRV…GMEKGVREAL (174 aa)) enclose the Macro domain.

This is an uncharacterized protein from Aeropyrum pernix (strain ATCC 700893 / DSM 11879 / JCM 9820 / NBRC 100138 / K1).